We begin with the raw amino-acid sequence, 878 residues long: Leucine--tRNA ligase (878 aa).

The short motif at 56-66 (PYPSGKLHMGH) is the 'HIGH' region element. The short motif at 630-634 (KMSKS) is the 'KMSKS' region element. Lysine 633 is an ATP binding site.

This sequence belongs to the class-I aminoacyl-tRNA synthetase family.

Its subcellular location is the cytoplasm. It carries out the reaction tRNA(Leu) + L-leucine + ATP = L-leucyl-tRNA(Leu) + AMP + diphosphate. This is Leucine--tRNA ligase from Prochlorococcus marinus (strain MIT 9313).